A 901-amino-acid polypeptide reads, in one-letter code: Protein translocase subunit SecA (901 aa).

Residues glutamine 87, 105 to 109 (GEGKT), and aspartate 512 contribute to the ATP site. Positions 852-901 (AQMQQLSHQSDDEAAAEDLAAQTGERKVGRNDPCPCGSGKKYKQCHGRLS) are disordered. Zn(2+)-binding residues include cysteine 885, cysteine 887, cysteine 896, and histidine 897. Over residues 891-901 (KKYKQCHGRLS) the composition is skewed to basic residues.

This sequence belongs to the SecA family. Monomer and homodimer. Part of the essential Sec protein translocation apparatus which comprises SecA, SecYEG and auxiliary proteins SecDF-YajC and YidC. Zn(2+) serves as cofactor.

The protein localises to the cell inner membrane. It is found in the cytoplasm. It catalyses the reaction ATP + H2O + cellular proteinSide 1 = ADP + phosphate + cellular proteinSide 2.. Part of the Sec protein translocase complex. Interacts with the SecYEG preprotein conducting channel. Has a central role in coupling the hydrolysis of ATP to the transfer of proteins into and across the cell membrane, serving both as a receptor for the preprotein-SecB complex and as an ATP-driven molecular motor driving the stepwise translocation of polypeptide chains across the membrane. This chain is Protein translocase subunit SecA, found in Klebsiella pneumoniae (strain 342).